The chain runs to 221 residues: N-(5'-phosphoribosyl)anthranilate isomerase (221 aa).

This sequence belongs to the TrpF family.

It carries out the reaction N-(5-phospho-beta-D-ribosyl)anthranilate = 1-(2-carboxyphenylamino)-1-deoxy-D-ribulose 5-phosphate. The protein operates within amino-acid biosynthesis; L-tryptophan biosynthesis; L-tryptophan from chorismate: step 3/5. This Chlorobaculum tepidum (strain ATCC 49652 / DSM 12025 / NBRC 103806 / TLS) (Chlorobium tepidum) protein is N-(5'-phosphoribosyl)anthranilate isomerase.